Reading from the N-terminus, the 397-residue chain is Vacuolar protein sorting-associated protein 37A (397 aa).

The tract at residues 1–22 is disordered; it reads MSWLFPLTKSASSSAAGSPGGL. A Phosphoserine modification is found at S18. Residues 308 to 397 enclose the VPS37 C-terminal domain; the sequence is KSTFEKKMQR…AMHSQFHAPL (90 aa).

The protein belongs to the VPS37 family. As to quaternary structure, component of the ESCRT-I complex (endosomal sorting complex required for transport I) which consists of TSG101, VPS28, a VPS37 protein (VPS37A to -D) and MVB12A or MVB12B in a 1:1:1:1 stoichiometry. Interacts with TSG101, VPS28 and HGS. Component of an ESCRT-I complex (endosomal sorting complex required for transport I) which consists of TSG101, VPS28, VPS37A and UBAP1 in a 1:1:1:1 stoichiometry. In terms of tissue distribution, widely expressed. Examined tissues include heart, brain, placenta, liver, skeletal muscle, kidney and pancreas. More abundant in liver. Strongly decreased or undetected in hepatomas.

The protein resides in the late endosome membrane. It is found in the nucleus. Component of the ESCRT-I complex, a regulator of vesicular trafficking process. Required for the sorting of endocytic ubiquitinated cargos into multivesicular bodies. May be involved in cell growth and differentiation. The chain is Vacuolar protein sorting-associated protein 37A (VPS37A) from Homo sapiens (Human).